The chain runs to 272 residues: Small ribosomal subunit protein mS23 (272 aa).

Residues 233-272 form a disordered region; sequence KENASKAAGDASAVSSEKQVEDDVVNFDESTDADQEVLHF. Acidic residues predominate over residues 252–272; sequence VEDDVVNFDESTDADQEVLHF.

This sequence belongs to the mitochondrion-specific ribosomal protein mS23 family. In terms of assembly, component of the mitochondrial small ribosomal subunit.

The protein localises to the mitochondrion. This Candida glabrata (strain ATCC 2001 / BCRC 20586 / JCM 3761 / NBRC 0622 / NRRL Y-65 / CBS 138) (Yeast) protein is Small ribosomal subunit protein mS23 (RSM25).